Consider the following 93-residue polypeptide: Putative membrane protein insertion efficiency factor (93 aa).

Residues 72 to 93 (VPEHFPSWRGPHPKTPSRKTPE) form a disordered region. Residues 82 to 93 (PHPKTPSRKTPE) are compositionally biased toward basic residues.

It belongs to the UPF0161 family.

It is found in the cell membrane. In terms of biological role, could be involved in insertion of integral membrane proteins into the membrane. The polypeptide is Putative membrane protein insertion efficiency factor (Deinococcus geothermalis (strain DSM 11300 / CIP 105573 / AG-3a)).